The chain runs to 837 residues: Ribosome biogenesis ATPase RIX7 (837 aa).

Disordered regions lie at residues R36 to E56 and I149 to L207. Residue S42 is modified to Phosphoserine. Residues Q43–E56 show a composition bias toward acidic residues. The segment covering I149–I163 has biased composition (polar residues). Residues K176–K192 are compositionally biased toward basic residues. ATP is bound at residue G246–T253. The segment at P443–K468 is disordered. Acidic residues predominate over residues S449–N461. G574 to T581 serves as a coordination point for ATP.

It belongs to the AAA ATPase family.

It is found in the nucleus. The protein resides in the nucleolus. In terms of biological role, involved in ribosome biogenesis. Seems to be required for restructuring nucleoplasmic 60S pre-ribosomal particles to make them competent for nuclear export. This chain is Ribosome biogenesis ATPase RIX7 (RIX7), found in Saccharomyces cerevisiae (strain ATCC 204508 / S288c) (Baker's yeast).